Consider the following 300-residue polypeptide: Hairy/enhancer-of-split related with YRPW motif protein 1 (300 aa).

The tract at residues 1 to 52 (MKRGHDYSSSDSELDENIEVEKESADENGNLSSAAGSMSPSTSSQILARKRR) is disordered. Residues 32–44 (SSAAGSMSPSTSS) are compositionally biased toward low complexity. The region spanning 48-103 (ARKRRRGIIEKRRRDRINNSLSELRRLVPSAFEKQGSAKLEKAEILQMTVDHLKML) is the bHLH domain. The region spanning 121 to 157 (YRSLGFRECLAEVARYLSIIEGMDTTDPLRVRLVSHL) is the Orange domain. Low complexity predominate over residues 199–210 (AHTSANSTSSST). Disordered stretches follow at residues 199–232 (AHTSANSTSSSTEAHHQNRLPGSPHAETSSLRVP) and 278–300 (LSPTTPTPSGKPYRPWGTEIGAF). A YRPW motif motif is present at residues 290–293 (YRPW).

It belongs to the HEY family. Efficient DNA binding requires dimerization with another bHLH protein. Binds DNA in the form of homodimer or more strongly as a heterodimer with hes1/hairy1 or hes4/hairy2b. Also weakly interacts with the bHLH proteins hes2, neurod1 and neurod4/ath3. Interacts (via Orange domain) with ccdc89/boip (via C-terminus).

It is found in the nucleus. Downstream effector of Notch signaling. Transcriptional repressor which binds preferentially to the canonical E box sequence 5'-CACGTG-3'. Acts as a suppressor of neurogenesis by antagonizing proneural gene function. Functions during floorplate development. Plays a role in pronephros formation in the inhibition of distal tubule and duct cell fates and the promotion of glomus and proximal tubule formation. The polypeptide is Hairy/enhancer-of-split related with YRPW motif protein 1 (hey1) (Xenopus tropicalis (Western clawed frog)).